We begin with the raw amino-acid sequence, 189 residues long: Large ribosomal subunit protein bL9 (189 aa).

Belongs to the bacterial ribosomal protein bL9 family.

Binds to the 23S rRNA. The polypeptide is Large ribosomal subunit protein bL9 (Brucella abortus (strain S19)).